The primary structure comprises 179 residues: Large ribosomal subunit protein uL5 (179 aa).

This sequence belongs to the universal ribosomal protein uL5 family. In terms of assembly, part of the 50S ribosomal subunit; part of the 5S rRNA/L5/L18/L25 subcomplex. Contacts the 5S rRNA and the P site tRNA. Forms a bridge to the 30S subunit in the 70S ribosome.

Functionally, this is one of the proteins that bind and probably mediate the attachment of the 5S RNA into the large ribosomal subunit, where it forms part of the central protuberance. In the 70S ribosome it contacts protein S13 of the 30S subunit (bridge B1b), connecting the 2 subunits; this bridge is implicated in subunit movement. Contacts the P site tRNA; the 5S rRNA and some of its associated proteins might help stabilize positioning of ribosome-bound tRNAs. In Exiguobacterium sibiricum (strain DSM 17290 / CCUG 55495 / CIP 109462 / JCM 13490 / 255-15), this protein is Large ribosomal subunit protein uL5.